Here is a 365-residue protein sequence, read N- to C-terminus: G-protein coupled receptor 4 (365 aa).

Residues 1 to 10 (MDNSTGTWEG) lie on the Extracellular side of the membrane. N-linked (GlcNAc...) asparagine glycosylation occurs at asparagine 3. A helical transmembrane segment spans residues 11–47 (CHVDSRVDHLFPPSLYIFVIGVGLPTNCLALWAAYRQ). 2 cysteine pairs are disulfide-bonded: cysteine 11–cysteine 260 and cysteine 92–cysteine 170. Residues 48–51 (VRQR) lie on the Cytoplasmic side of the membrane. A helical membrane pass occupies residues 52–82 (NELGVYLMNLSIADLLYICTLPLWVDYFLHH). Residues 83–87 (DNWIH) lie on the Extracellular side of the membrane. The chain crosses the membrane as a helical span at residues 88-123 (GPGSCKLFGFIFYSNIYISIAFLCCISVDRYLAVAH). Residues 124 to 131 (PLRFARLR) are Cytoplasmic-facing. Residues 132–158 (RVKTAVAVSSVVWATELGANSAPLFHD) form a helical membrane-spanning segment. At 159–174 (ELFRDRYNHTFCFEKF) the chain is on the extracellular side. Residues 159–174 (ELFRDRYNHTFCFEKF) are extracellular loop 2 (ECL2). Asparagine 166 is a glycosylation site (N-linked (GlcNAc...) asparagine). Residues 175–212 (PMERWVAWMNLYRVFVGFLFPWALMLLCYRGILRAVQS) traverse the membrane as a helical segment. At 213–216 (SVST) the chain is on the cytoplasmic side. A helical transmembrane segment spans residues 217-252 (ERQEKVKIKRLALSLIAIVLVCFAPYHALLLSRSAV). At 253-262 (YLGRPWDCGF) the chain is on the extracellular side. A helical membrane pass occupies residues 263-291 (EERVFSAYHSSLAFTSLNCVADPILYCLV). At 292-365 (NEGARSDVAK…PLKVLLPPAQ (74 aa)) the chain is on the cytoplasmic side.

Belongs to the G-protein coupled receptor 1 family.

It is found in the cell membrane. Activated by a network of residues that connects an extracellular-facing cavity to Glu-147, a conserved charged residue buried in the transmembrane core of the receptor. Protonation likely drives conformational changes in extracellular loop 2 (ECL2), which stabilizes movement of transmembrane 3 (TM3) and a series of rearrangements that connect the extracellular-facing cavity to Glu-147, a residue only conserved in proton-sensing G-protein coupled receptors. Functionally, proton-sensing G-protein coupled receptor activated by extracellular pH, which is required to monitor pH changes and generate adaptive reactions. Activated by an optimal pH of 6.8-7.2. Ligand binding causes a conformation change that triggers signaling via guanine nucleotide-binding proteins (G proteins) and modulates the activity of downstream effectors, such as adenylate cyclase. GPR4 is mainly coupled to G(s) G proteins and mediates activation of adenylate cyclase activity. May also couple with G(q) and G(12)/G(13) G proteins. Acts as a key regulator of respiratory sensitivity to CO2/H(+) in brain retrotrapezoid nucleus neurons: acts by mediating detection of protons generated by the formation of carbonic acid in the blood, an important mechanism to impulse to breathe. Also acts as a regulator of acid secretion in the kidney collecting duct by maintaining acid-base homeostasis in the kidney. Acidosis-induced GPR4 activation increases paracellular gap formation and permeability of vascular endothelial cells, possibly through the G(12)/G(13)/Rho GTPase signaling pathway. This is G-protein coupled receptor 4 from Rattus norvegicus (Rat).